A 353-amino-acid polypeptide reads, in one-letter code: Paraneoplastic antigen Ma1 (353 aa).

Belongs to the PNMA family. Testis- and brain-specific. In some cancer patients, specifically expressed by paraneoplastic tumor cells.

The protein localises to the nucleus. Its subcellular location is the nucleolus. This Homo sapiens (Human) protein is Paraneoplastic antigen Ma1 (PNMA1).